The sequence spans 141 residues: Protein C19orf12 homolog (141 aa).

A helical transmembrane segment spans residues 33–53 (LVAAAGAFLGGLVGGPPGIAV).

The protein belongs to the C19orf12 family.

The protein localises to the mitochondrion. It localises to the mitochondrion membrane. It is found in the endoplasmic reticulum. The protein resides in the cytoplasm. Its subcellular location is the cytosol. The polypeptide is Protein C19orf12 homolog (Xenopus tropicalis (Western clawed frog)).